A 270-amino-acid chain; its full sequence is MAVITKIEVQKRSKERFNIYIDKGQGEEYGFSVDQVILIKHGLQKGLEIDEIELGNILYNEEVQKAYLQAISYLSYQMRTKQEIEDFLRKKEVGQAIISEVVSKLLHDRYINDKEYAVLYTRTQSNVNRKGPTVIKRELLNKGVQDLIITHSLQEYPKEKQIENALFLIEKKKKSYQKHSFLQMKLKLDEMLVRKGYSREVIQICLEELKDEKDDEKQQEALHYHGNKYYEKYKKHDGWTFENKMKQALYRKGFSIDEIEIFLQMKREEE.

This sequence belongs to the RecX family.

It localises to the cytoplasm. In terms of biological role, modulates RecA activity. This is Regulatory protein RecX from Bacillus cereus (strain B4264).